We begin with the raw amino-acid sequence, 353 residues long: Photosystem II protein D1 (353 aa).

Residue Thr-2 is modified to N-acetylthreonine. A Phosphothreonine modification is found at Thr-2. Transmembrane regions (helical) follow at residues Tyr-29–Ser-46, His-118–Leu-133, and Trp-142–Ala-156. A chlorophyll a-binding site is contributed by His-118. Tyr-126 contacts pheophytin a. Asp-170 and Glu-189 together coordinate [CaMn4O5] cluster. The chain crosses the membrane as a helical span at residues Phe-197–Leu-218. His-198 is a binding site for chlorophyll a. A quinone contacts are provided by residues His-215 and Ser-264–Phe-265. His-215 contributes to the Fe cation binding site. Residue His-272 coordinates Fe cation. A helical transmembrane segment spans residues Phe-274–Leu-288. Residues His-332, Glu-333, Asp-342, and Ala-344 each contribute to the [CaMn4O5] cluster site. Residues Ala-345–Gly-353 constitute a propeptide that is removed on maturation.

The protein belongs to the reaction center PufL/M/PsbA/D family. As to quaternary structure, PSII is composed of 1 copy each of membrane proteins PsbA, PsbB, PsbC, PsbD, PsbE, PsbF, PsbH, PsbI, PsbJ, PsbK, PsbL, PsbM, PsbT, PsbX, PsbY, PsbZ, Psb30/Ycf12, at least 3 peripheral proteins of the oxygen-evolving complex and a large number of cofactors. It forms dimeric complexes. Requires The D1/D2 heterodimer binds P680, chlorophylls that are the primary electron donor of PSII, and subsequent electron acceptors. It shares a non-heme iron and each subunit binds pheophytin, quinone, additional chlorophylls, carotenoids and lipids. D1 provides most of the ligands for the Mn4-Ca-O5 cluster of the oxygen-evolving complex (OEC). There is also a Cl(-1) ion associated with D1 and D2, which is required for oxygen evolution. The PSII complex binds additional chlorophylls, carotenoids and specific lipids. as cofactor. Post-translationally, tyr-161 forms a radical intermediate that is referred to as redox-active TyrZ, YZ or Y-Z. In terms of processing, C-terminally processed by CTPA; processing is essential to allow assembly of the oxygen-evolving complex and thus photosynthetic growth.

It is found in the plastid. It localises to the chloroplast thylakoid membrane. The enzyme catalyses 2 a plastoquinone + 4 hnu + 2 H2O = 2 a plastoquinol + O2. In terms of biological role, photosystem II (PSII) is a light-driven water:plastoquinone oxidoreductase that uses light energy to abstract electrons from H(2)O, generating O(2) and a proton gradient subsequently used for ATP formation. It consists of a core antenna complex that captures photons, and an electron transfer chain that converts photonic excitation into a charge separation. The D1/D2 (PsbA/PsbD) reaction center heterodimer binds P680, the primary electron donor of PSII as well as several subsequent electron acceptors. The polypeptide is Photosystem II protein D1 (Nymphaea alba (White water-lily)).